We begin with the raw amino-acid sequence, 64 residues long: Large ribosomal subunit protein bL28 (64 aa).

Residues Met-1–Asn-23 are disordered.

It belongs to the bacterial ribosomal protein bL28 family.

The protein is Large ribosomal subunit protein bL28 of Mesomycoplasma hyopneumoniae (strain J / ATCC 25934 / NCTC 10110) (Mycoplasma hyopneumoniae).